The following is a 420-amino-acid chain: Zinc finger and BTB domain-containing protein 42 (420 aa).

Positions 24–92 constitute a BTB domain; the sequence is CDCTVLVGDA…MYEGRLDLHS (69 aa). 2 disordered regions span residues 174–204 and 216–248; these read PPSWQVSEESSGALDLSLKPGPRPEQAHPPC and QGAQPLVKAEQDSFSEQDSSSPQSADRSPPPVC. The segment covering 227-241 has biased composition (low complexity); that stretch reads DSFSEQDSSSPQSAD. 4 C2H2-type zinc fingers span residues 292-314, 332-354, 360-382, and 388-411; these read CICPLCCKLFPSTHALQPHLSAH, PTCPLCSKTFSCTYTLKRHERTH, YTCVQCGKSFQYSHNLSRHAVVH, and HACRWCERRFTQSGDLYRHVRKFH.

The protein belongs to the krueppel C2H2-type zinc-finger protein family. ZBTB18 subfamily.

The protein resides in the cytoplasm. Its subcellular location is the nucleus. It localises to the nucleoplasm. In terms of biological role, transcriptional repressor. Specifically binds DNA and probably acts by recruiting chromatin remodeling multiprotein complexes. This is Zinc finger and BTB domain-containing protein 42 (Zbtb42) from Rattus norvegicus (Rat).